A 278-amino-acid chain; its full sequence is Putative peptidase Cgl1093 (278 aa).

The signal sequence occupies residues 1 to 32 (MSSASFTTKALSVLAALTAASAPLVAASPAHA). Residues 33–236 (LANARNVTGS…HAEWIAYYTG (204 aa)) enclose the Peptidase S1 domain. Cysteines 59 and 75 form a disulfide. Residues His74, Asp123, and Ser189 each act as charge relay system in the active site.

Belongs to the peptidase S1 family.

Its subcellular location is the secreted. The chain is Putative peptidase Cgl1093 from Corynebacterium glutamicum (strain ATCC 13032 / DSM 20300 / JCM 1318 / BCRC 11384 / CCUG 27702 / LMG 3730 / NBRC 12168 / NCIMB 10025 / NRRL B-2784 / 534).